The primary structure comprises 117 residues: Histone-like protein Hq1 (117 aa).

2 stretches are compositionally biased toward basic residues: residues 1–17 (MPAKKRKTTRQRRRSKA) and 39–50 (RKLRAAQKKLAK). The interval 1–117 (MPAKKRKTTR…RGRGRPRKKA (117 aa)) is disordered. Basic and acidic residues predominate over residues 51–68 (AKKDASRKLAKLRKEAAR). Basic residues predominate over residues 71–117 (AAAKKTRAPSKKGRKKATRKKGGGRSRKTARKVSTMKRGRGRPRKKA).

Functionally, binds DNA in vitro. The protein is Histone-like protein Hq1 (hcbA) of Coxiella burnetii (strain RSA 493 / Nine Mile phase I).